Consider the following 570-residue polypeptide: Sulfite reductase [NADPH] hemoprotein beta-component (570 aa).

4 residues coordinate [4Fe-4S] cluster: cysteine 434, cysteine 440, cysteine 479, and cysteine 483. Cysteine 483 lines the siroheme pocket.

Belongs to the nitrite and sulfite reductase 4Fe-4S domain family. As to quaternary structure, alpha(8)-beta(8). The alpha component is a flavoprotein, the beta component is a hemoprotein. Requires siroheme as cofactor. The cofactor is [4Fe-4S] cluster.

It carries out the reaction hydrogen sulfide + 3 NADP(+) + 3 H2O = sulfite + 3 NADPH + 4 H(+). Its pathway is sulfur metabolism; hydrogen sulfide biosynthesis; hydrogen sulfide from sulfite (NADPH route): step 1/1. Functionally, component of the sulfite reductase complex that catalyzes the 6-electron reduction of sulfite to sulfide. This is one of several activities required for the biosynthesis of L-cysteine from sulfate. This chain is Sulfite reductase [NADPH] hemoprotein beta-component, found in Escherichia coli O6:H1 (strain CFT073 / ATCC 700928 / UPEC).